The sequence spans 359 residues: Peptide chain release factor 1 (359 aa).

N5-methylglutamine is present on Gln-235.

The protein belongs to the prokaryotic/mitochondrial release factor family. Methylated by PrmC. Methylation increases the termination efficiency of RF1.

It localises to the cytoplasm. Its function is as follows. Peptide chain release factor 1 directs the termination of translation in response to the peptide chain termination codons UAG and UAA. The sequence is that of Peptide chain release factor 1 from Polynucleobacter asymbioticus (strain DSM 18221 / CIP 109841 / QLW-P1DMWA-1) (Polynucleobacter necessarius subsp. asymbioticus).